Here is a 108-residue protein sequence, read N- to C-terminus: Class I hydrophobin 3 (108 aa).

A signal peptide spans 1–17 (MFFQTTIVAALASLAVA). Intrachain disulfides connect Cys28-Cys87, Cys35-Cys81, Cys36-Cys69, and Cys88-Cys101. Asn37 is a glycosylation site (N-linked (GlcNAc...) asparagine).

Belongs to the fungal hydrophobin family. Self-assembles to form functional amyloid fibrils called rodlets. Self-assembly into fibrillar rodlets occurs spontaneously at hydrophobic:hydrophilic interfaces and the rodlets further associate laterally to form amphipathic monolayers.

The protein localises to the secreted. The protein resides in the cell wall. Aerial growth, conidiation, and dispersal of filamentous fungi in the environment rely upon a capability of their secreting small amphipathic proteins called hydrophobins (HPBs) with low sequence identity. Class I can self-assemble into an outermost layer of rodlet bundles on aerial cell surfaces, conferring cellular hydrophobicity that supports fungal growth, development and dispersal; whereas Class II form highly ordered films at water-air interfaces through intermolecular interactions but contribute nothing to the rodlet structure. Vmh3 is a class I hydrophobin that is essential for the maintenance of the surface hydrophobicity of the mycelium and might be involved in the development of fruiting bodies. Plays an important role in hyphal resistance against environmental stress. Necessary for the efficient biodegradation of lignin. The polypeptide is Class I hydrophobin 3 (Pleurotus ostreatus (strain PC15) (Oyster mushroom)).